The sequence spans 832 residues: Thymine dioxygenase JBP1-A (832 aa).

Residues Met-1–Met-12 show a composition bias toward basic and acidic residues. A disordered region spans residues Met-1–Lys-24. The segment at Val-80–Ala-282 is thymine dioxygenase. Positions 207, 209, and 257 each coordinate Fe cation. Arg-273 is a 2-oxoglutarate binding site. A DNA-binding JBP1 domain region spans residues Leu-409–Ser-578.

Belongs to the TET family. JBP1 subfamily. As to quaternary structure, monomer. Binds to DNA as a monomer. Fe(2+) serves as cofactor.

The protein localises to the nucleus. The enzyme catalyses thymine + 2-oxoglutarate + O2 = 5-hydroxymethyluracil + succinate + CO2. Functionally, dioxygenase that catalyzes the first step of DNA base J (beta-d-glucosyl-HOMedU) biosynthesis by converting thymine to 5-hydroxymethyluracil (HOMedU). DNA base J is a hypermodified thymidine residue found in the genome of kinetoplastid parasites, which is localized primarily to repetitive DNA, namely the telomeres, and is implicated in the regulation of antigenic variation. Also specifically binds to base J-containing DNA (J-DNA). Involved in propagation and maintenance of DNA base J synthesis initiated by JBP2 by specifically binding already synthesized DNA base J and propagating J synthesis. Thymine dioxygenase activity and J-DNA-binding are independent functions. This Trypanosoma cruzi (strain CL Brener) protein is Thymine dioxygenase JBP1-A (JBP1A).